Here is a 337-residue protein sequence, read N- to C-terminus: Ketol-acid reductoisomerase (NAD(P)(+)) (337 aa).

Residues 2–187 (ARMFYDADAN…GCTRAGVIET (186 aa)) enclose the KARI N-terminal Rossmann domain. NADP(+) contacts are provided by residues 25–28 (FGSQ), arginine 48, and 88–91 (DEVQ). Histidine 113 is a catalytic residue. Glycine 139 is a binding site for NADP(+). The KARI C-terminal knotted domain maps to 188–333 (SFQEETETDL…AELRGMMPWL (146 aa)). Residues aspartate 196, glutamate 200, glutamate 232, and glutamate 236 each coordinate Mg(2+). Serine 257 contacts substrate.

It belongs to the ketol-acid reductoisomerase family. Requires Mg(2+) as cofactor.

The enzyme catalyses (2R)-2,3-dihydroxy-3-methylbutanoate + NAD(+) = (2S)-2-acetolactate + NADH + H(+). The catalysed reaction is (2R)-2,3-dihydroxy-3-methylbutanoate + NADP(+) = (2S)-2-acetolactate + NADPH + H(+). It functions in the pathway amino-acid biosynthesis; L-isoleucine biosynthesis; L-isoleucine from 2-oxobutanoate: step 2/4. The protein operates within amino-acid biosynthesis; L-valine biosynthesis; L-valine from pyruvate: step 2/4. Functionally, involved in the biosynthesis of branched-chain amino acids (BCAA). Catalyzes an alkyl-migration followed by a ketol-acid reduction of (S)-2-acetolactate (S2AL) to yield (R)-2,3-dihydroxy-isovalerate. In the isomerase reaction, S2AL is rearranged via a Mg-dependent methyl migration to produce 3-hydroxy-3-methyl-2-ketobutyrate (HMKB). In the reductase reaction, this 2-ketoacid undergoes a metal-dependent reduction by NADPH or NADH to yield (R)-2,3-dihydroxy-isovalerate. This Syntrophomonas wolfei subsp. wolfei (strain DSM 2245B / Goettingen) protein is Ketol-acid reductoisomerase (NAD(P)(+)).